A 628-amino-acid polypeptide reads, in one-letter code: E3 SUMO-protein ligase PIAS3 (628 aa).

The interaction with CCAR2 stretch occupies residues 1-200; it reads MAELGELKHM…QLRFCLCETS (200 aa). The SAP domain occupies 11–45; sequence VMSFRVSELQVLLGFAGRNKSGRKHELLAKALHLL. An LXXLL motif motif is present at residues 19–23; the sequence is LQVLL. Glycyl lysine isopeptide (Lys-Gly) (interchain with G-Cter in SUMO2) cross-links involve residues K46, K56, K230, and K307. The PINIT domain occupies 115–280; the sequence is MHPPLPQPVH…SLSVYLVRQL (166 aa). Residues 312–393 form an SP-RING-type zinc finger; sequence PDSEVATTSL…FMEILNSCSD (82 aa). 4 residues coordinate Zn(2+): C343, H345, C366, and C369. An SUMO1-binding region spans residues 450 to 460; it reads LTIESSSDEED. Glycyl lysine isopeptide (Lys-Gly) (interchain with G-Cter in SUMO2) cross-links involve residues K466 and K482. Residues 571-628 form a disordered region; the sequence is GPLAPTLGSSHRSSTPAPPPGRVSSIVAPGSSLREGHGGPLPSGPSLTGCRSDVISLD.

The protein belongs to the PIAS family. As to quaternary structure, monomer. Interacts with PLAG1 and ZFHX3. Interacts with STAT5A; the interaction occurs on stimulation by PRL. Binds SUMO1 and UBE2I. Interacts with AR, BCL11A, HMGA2, IRF1 and NCOA2. Interacts with MITF; the interaction inhibits the transcriptional activity of MITF. Interacts with STAT3; the interaction occurs on stimulation by IL6, CNTF or OSM and inhibits the DNA binding activity of STAT3. Interacts with GFI1; the interaction relieves the inhibitory effect of PIAS3 on STAT3-mediated transcriptional activity. Interacts with MTA1. Interacts with CCAR2 (via N-terminus). Interacts with TRIM8. Interacts with PRDM1. Post-translationally, sumoylated. In terms of tissue distribution, expressed in kidney, heart, spleen, brain and cerebellum; weak expression, if any, in liver and lung.

The protein localises to the cytoplasm. Its subcellular location is the nucleus. The protein resides in the nucleus speckle. The protein operates within protein modification; protein sumoylation. Its function is as follows. Functions as an E3-type small ubiquitin-like modifier (SUMO) ligase, stabilizing the interaction between UBE2I and the substrate, and as a SUMO-tethering factor. Plays a crucial role as a transcriptional coregulation in various cellular pathways, including the STAT pathway and the steroid hormone signaling pathway. Repressor of STAT3 signaling via inhibiting STAT3 DNA-binding and suppressing cell growth. Repressor of MITF transcriptional activity. Enhances the sumoylation of MTA1 and may participate in its paralog-selective sumoylation. Sumoylates CCAR2 which promotes its interaction with SIRT1. Diminishes the sumoylation of ZFHX3 by preventing the colocalization of ZFHX3 with SUMO1 in the nucleus. This is E3 SUMO-protein ligase PIAS3 (Pias3) from Mus musculus (Mouse).